A 172-amino-acid polypeptide reads, in one-letter code: C-phycocyanin beta chain (172 aa).

(2R,3E)-phycocyanobilin-binding positions include N35, D39, N72, R77, C82, 82–88 (CLRDMEI), 149–151 (TTG), and C153. Residue N72 is modified to N4-methylasparagine.

The protein belongs to the phycobiliprotein family. As to quaternary structure, heterodimer of an alpha and a beta subunit. Dimers further assemble into trimers and the trimers into hexamers. The basic functional unit of phycobiliproteins is a ring-shaped hexamer formed from two back-to-back trimers contacting via the alpha chain subunits. The trimers are composed of alpha/beta subunit heterodimers arranged around a three-fold axis of symmetry. The phycoerythrins also contain a gamma subunit which is located in the center of the hexamer. Contains two covalently linked phycocyanobilin chromophores.

It localises to the plastid. The protein resides in the chloroplast thylakoid membrane. In terms of biological role, light-harvesting photosynthetic tetrapyrrole chromophore-protein from the phycobiliprotein complex (phycobilisome, PBS). Phycocyanin is the major phycobiliprotein in the PBS rod. This Galdieria sulphuraria (Red alga) protein is C-phycocyanin beta chain (cpcB).